A 757-amino-acid polypeptide reads, in one-letter code: MTSGLLTPIKVTKKRLLSCAAALAFSAAVPVAFAQEDTGTAITSSDNGGHPGDWLSYGRSYSEQRYSPLDQINTENVGKLKLAWHYDLDTNRGQEGTPLIVNGVMYATTNWSKMKALDAATGKLLWSYDPKVPGNIADRGCCDTVSRGAAYWNGKVYFGTFDGRLIALDAKTGKLVWSVYTIPKEAQLGHQRSYTVDGAPRIAKGKVLIGNGGAEFGARGFVSAFDAETGKLDWRFFTVPNPENKPDGAASDDILMSKAYPTWGKNGAWKQQGGGGTVWDSLVYDPVTDLVYLGVGNGSPWNYKFRSEGKGDNLFLGSIVAINPDTGKYVWHFQETPMDEWDYTSVQQIMTLDMPVNGEMRHVIVHAPKNGFFYIIDAKTGKFITGKPYTYENWANGLDPVTGRPNYVPDALWTLTGKPWLGIPGELGGHNFAAMAYSPKTKLVYIPAQQIPLLYDGQKGGFKAYHDAWNLGLDMNKIGLFDDNDPEHVAAKKDFLKVLKGWTVAWDPEKMAPAFTINHKGPWNGGLLATAGNVIFQGLANGEFHAYDATNGNDLYSFPAQSAIIAPPVTYTANGKQYVAVEVGWGGIYPFLYGGVARTSGWTVNHSRVIAFSLDGKDSLPPKNELGFTPVKPVPTYDEARQKDGYFMYQTFCSACHGDNAISGGVLPDLRWSGAPRGRESFYKLVGRGALTAYGMDRFDTSMTPEQIEDIRNFIVKRANESYDDEVKARENSTGVPNDQFLNVPQSTADVPTADHP.

An N-terminal signal peptide occupies residues 1-34 (MTSGLLTPIKVTKKRLLSCAAALAFSAAVPVAFA). Glutamine 35 bears the Pyrrolidone carboxylic acid mark. Glutamate 95 serves as a coordination point for pyrroloquinoline quinone. Cysteine 141 and cysteine 142 form a disulfide bridge. Arginine 147 serves as a coordination point for pyrroloquinoline quinone. Glutamate 215 is a binding site for Ca(2+). Threonine 277 serves as a coordination point for pyrroloquinoline quinone. Asparagine 297 and aspartate 342 together coordinate Ca(2+). Catalysis depends on aspartate 342, which acts as the Proton acceptor. 2 residues coordinate pyrroloquinoline quinone: lysine 369 and isoleucine 588. A Cytochrome c domain is found at 640–719 (ARQKDGYFMY…DIRNFIVKRA (80 aa)). Residues cysteine 653, cysteine 656, histidine 657, and methionine 696 each contribute to the heme c site. Positions 726 to 757 (EVKARENSTGVPNDQFLNVPQSTADVPTADHP) are disordered. Residues 732 to 750 (NSTGVPNDQFLNVPQSTAD) are compositionally biased toward polar residues.

The protein belongs to the bacterial PQQ dehydrogenase family. The alcohol dehydrogenase multicomponent enzyme system is composed of a dehydrogenase subunit I (AdhA), a cytochrome c subunit II (AdhB) and a subunit III (AdhS). Requires pyrroloquinoline quinone as cofactor. It depends on Ca(2+) as a cofactor. Heme c is required as a cofactor.

It is found in the cell membrane. It carries out the reaction ethanol + a ubiquinone = a ubiquinol + acetaldehyde. With respect to regulation, 2,6-dichloro-4-dicyanovinylphenol (PC16) and antimycin A inhibit ubiquinol oxidation activity more selectively than the ubiquinone reductase activity. In terms of biological role, dehydrogenase component of the alcohol dehydrogenase multicomponent enzyme system which is involved in the production of acetic acid and in the ethanol oxidase respiratory chain. Quinohemoprotein alcohol dehydrogenase (ADH) catalyzes the oxidation of ethanol to acetaldehyde by transferring electrons to the ubiquinone embedded in the membrane phospholipids. The electrons transfer from ethanol to membranous ubiquinone occurs from pyrroloquinoline quinone (PQQ) to one heme c in subunit I (AdhA), and finally to two heme c in subunit II (AdhB). Besides ubiquinone reduction, ADH also has a ubiquinol (QH2) oxidation reaction which mediates electron transfer from ubiquinol to the non-energy generating bypass oxidase system. The electrons transfer occurs from ubiquinol (QH2) to the additional heme c within subunit II (AdhB). Also able to use quinone analogs such as 2,3-dimethoxy-5-methyl-6-n-decyl-1,4-benzoquinone (DB) and 2,3-dimethoxy-5-methyl-6-n-pentyl-1,4-benzoquinone (PB). In Gluconobacter oxydans (strain 621H) (Gluconobacter suboxydans), this protein is Alcohol dehydrogenase (quinone), dehydrogenase subunit.